A 278-amino-acid chain; its full sequence is uncharacterized protein (278 aa).

The segment at 251-278 is disordered; sequence TLSENKKQKSSSTSPETDSDMSEFFGDN.

This is an uncharacterized protein from Aedes pseudoscutellaris reovirus (isolate France) (ApRV).